The sequence spans 649 residues: V-type ATP synthase subunit I (649 aa).

The next 7 membrane-spanning stretches (helical) occupy residues 312–332 (FLSF…GLIF), 360–380 (FMIL…FFGV), 455–475 (DNIL…LGML), 485–505 (IGWV…LQAV), 520–540 (GQVG…GGII), 556–576 (VFSD…GAMV), and 593–613 (VLII…GGVI).

The protein belongs to the V-ATPase 116 kDa subunit family.

It is found in the cell membrane. Produces ATP from ADP in the presence of a proton gradient across the membrane. The sequence is that of V-type ATP synthase subunit I (atpI) from Chlamydia muridarum (strain MoPn / Nigg).